Here is a 241-residue protein sequence, read N- to C-terminus: Chloride intracellular channel protein 1 (241 aa).

A2 carries the post-translational modification N-acetylalanine. Residues 2–90 (AEEQPQVELF…EEFLEAVLCP (89 aa)) form a required for insertion into the membrane region. An N6-acetyllysine modification is found at K13. C24 provides a ligand contact to glutathione. An S-glutathionyl cysteine; alternate modification is found at C24. The G-site signature appears at 24 to 27 (CPFS). The cysteines at positions 24 and 59 are disulfide-linked. A helical membrane pass occupies residues 26 to 46 (FSQRLFMVLWLKGVTFNVTTV). L64 and T77 together coordinate glutathione. Residues 93 to 233 (YPKLAALNPE…PDDEEIELAY (141 aa)) enclose the GST C-terminal domain. The residue at position 119 (K119) is an N6-acetyllysine. Phosphoserine is present on S121. The residue at position 131 (K131) is an N6-acetyllysine. S156 and S211 each carry phosphoserine. Y233 carries the post-translational modification Phosphotyrosine.

It belongs to the chloride channel CLIC family. Monomer. Homodimer (in vitro). Interacts with TRAPPC2. Dimerization requires a conformation change that leads to the exposure of a large hydrophobic surface. In vivo, this may lead to membrane insertion. Interacts with AKAP9. Post-translationally, hydrogen peroxide treatment causes a conformation change, leading to dimerization and formation of an intramolecular disulfide bond between Cys-24 and Cys-59. Expression is prominent in heart, placenta, liver, kidney and pancreas.

Its subcellular location is the nucleus. It is found in the nucleus membrane. It localises to the cytoplasm. The protein resides in the cell membrane. The protein localises to the endoplasmic reticulum. It catalyses the reaction L-dehydroascorbate + 2 glutathione = glutathione disulfide + L-ascorbate. The catalysed reaction is chloride(in) = chloride(out). The enzyme catalyses iodide(out) = iodide(in). It carries out the reaction thiocyanate(in) = thiocyanate(out). It catalyses the reaction nitrate(in) = nitrate(out). The catalysed reaction is bromide(in) = bromide(out). The enzyme catalyses fluoride(in) = fluoride(out). The oxidoreductase activity is inhibited by rapamycin, amphotericin B and IAA-94. The channel conductance is regulated by pH and redox membrane potential. Inhibited by IAA-94. Its function is as follows. In the soluble state, catalyzes glutaredoxin-like thiol disulfide exchange reactions with reduced glutathione as electron donor. Reduces selenite and dehydroascorbate and may act as an antioxidant during oxidative stress response. Can insert into membranes and form voltage-dependent multi-ion conductive channels. Membrane insertion seems to be redox-regulated and may occur only under oxidizing conditions. Involved in regulation of the cell cycle. The chain is Chloride intracellular channel protein 1 from Homo sapiens (Human).